Consider the following 691-residue polypeptide: Elongation factor G (691 aa).

Residues 8 to 283 enclose the tr-type G domain; it reads EDYRNFGIMA…AVVDYLPSPV (276 aa). Residues 17–24, 81–85, and 135–138 each bind GTP; these read AHIDAGKT, DTPGH, and NKMD.

This sequence belongs to the TRAFAC class translation factor GTPase superfamily. Classic translation factor GTPase family. EF-G/EF-2 subfamily.

The protein localises to the cytoplasm. Catalyzes the GTP-dependent ribosomal translocation step during translation elongation. During this step, the ribosome changes from the pre-translocational (PRE) to the post-translocational (POST) state as the newly formed A-site-bound peptidyl-tRNA and P-site-bound deacylated tRNA move to the P and E sites, respectively. Catalyzes the coordinated movement of the two tRNA molecules, the mRNA and conformational changes in the ribosome. The polypeptide is Elongation factor G (Methylorubrum populi (strain ATCC BAA-705 / NCIMB 13946 / BJ001) (Methylobacterium populi)).